The following is a 720-amino-acid chain: Phosphoribosylformylglycinamidine synthase subunit PurL (720 aa).

His34 is a catalytic residue. Tyr37 is an ATP binding site. Glu83 contacts Mg(2+). Residues 84 to 87 and Arg106 contribute to the substrate site; that span reads SHNH. His85 functions as the Proton acceptor in the catalytic mechanism. Position 107 (Asp107) interacts with Mg(2+). Substrate is bound at residue Gln231. Asp259 is a binding site for Mg(2+). 303–305 contacts substrate; sequence ESQ. 2 residues coordinate ATP: Asp480 and Gly517. Residue Asn518 participates in Mg(2+) binding. Position 520 (Ser520) interacts with substrate.

The protein belongs to the FGAMS family. As to quaternary structure, monomer. Part of the FGAM synthase complex composed of 1 PurL, 1 PurQ and 2 PurS subunits.

It is found in the cytoplasm. It carries out the reaction N(2)-formyl-N(1)-(5-phospho-beta-D-ribosyl)glycinamide + L-glutamine + ATP + H2O = 2-formamido-N(1)-(5-O-phospho-beta-D-ribosyl)acetamidine + L-glutamate + ADP + phosphate + H(+). Its pathway is purine metabolism; IMP biosynthesis via de novo pathway; 5-amino-1-(5-phospho-D-ribosyl)imidazole from N(2)-formyl-N(1)-(5-phospho-D-ribosyl)glycinamide: step 1/2. Part of the phosphoribosylformylglycinamidine synthase complex involved in the purines biosynthetic pathway. Catalyzes the ATP-dependent conversion of formylglycinamide ribonucleotide (FGAR) and glutamine to yield formylglycinamidine ribonucleotide (FGAM) and glutamate. The FGAM synthase complex is composed of three subunits. PurQ produces an ammonia molecule by converting glutamine to glutamate. PurL transfers the ammonia molecule to FGAR to form FGAM in an ATP-dependent manner. PurS interacts with PurQ and PurL and is thought to assist in the transfer of the ammonia molecule from PurQ to PurL. This Haloarcula marismortui (strain ATCC 43049 / DSM 3752 / JCM 8966 / VKM B-1809) (Halobacterium marismortui) protein is Phosphoribosylformylglycinamidine synthase subunit PurL.